Consider the following 417-residue polypeptide: NADH-quinone oxidoreductase subunit D 1 (417 aa).

The protein belongs to the complex I 49 kDa subunit family. In terms of assembly, NDH-1 is composed of 14 different subunits. Subunits NuoB, C, D, E, F, and G constitute the peripheral sector of the complex.

The protein localises to the cell membrane. It carries out the reaction a quinone + NADH + 5 H(+)(in) = a quinol + NAD(+) + 4 H(+)(out). NDH-1 shuttles electrons from NADH, via FMN and iron-sulfur (Fe-S) centers, to quinones in the respiratory chain. The immediate electron acceptor for the enzyme in this species is believed to be ubiquinone. Couples the redox reaction to proton translocation (for every two electrons transferred, four hydrogen ions are translocated across the cytoplasmic membrane), and thus conserves the redox energy in a proton gradient. The sequence is that of NADH-quinone oxidoreductase subunit D 1 from Roseiflexus castenholzii (strain DSM 13941 / HLO8).